We begin with the raw amino-acid sequence, 343 residues long: Heme A synthase (343 aa).

Transmembrane regions (helical) follow at residues 13-33, 96-116, 130-150, 165-185, 197-217, 258-278, 290-310, and 311-331; these read VALWLFVVAVLVFAMVVVGGA, HRLLGRLVGVVFAIPFVFFLI, VLLGLGGLQGVVGWWMVSSGL, LGLALALFVFVIWTALDAWAG, GWALAFLGAVFFQSLLGALVA, LHHRLMAYALFVAAIVAGVAA, LTAFVLVGVVCLQAGLGIWTL, and MTAVPLALGVLHQAGAAILLA. Position 260 (histidine 260) interacts with heme. Histidine 322 is a binding site for heme.

This sequence belongs to the COX15/CtaA family. Type 2 subfamily. As to quaternary structure, interacts with CtaB. Heme b serves as cofactor.

It localises to the cell membrane. It catalyses the reaction Fe(II)-heme o + 2 A + H2O = Fe(II)-heme a + 2 AH2. It participates in porphyrin-containing compound metabolism; heme A biosynthesis; heme A from heme O: step 1/1. In terms of biological role, catalyzes the conversion of heme O to heme A by two successive hydroxylations of the methyl group at C8. The first hydroxylation forms heme I, the second hydroxylation results in an unstable dihydroxymethyl group, which spontaneously dehydrates, resulting in the formyl group of heme A. This is Heme A synthase from Caulobacter sp. (strain K31).